The following is an 861-amino-acid chain: Translation initiation factor IF-2 (861 aa).

2 disordered regions span residues 1–69 (MSDA…GESA) and 92–273 (ARAR…GREK). Residues 53 to 65 (GGPGGKQGGGAKG) show a composition bias toward gly residues. Residues 94–108 (ARAEAADREAQKKQD) are compositionally biased toward basic and acidic residues. Residues 109 to 120 (AAAMAQRAASEQ) show a composition bias toward low complexity. Basic and acidic residues-rich tracts occupy residues 121–155 (RQLEEQRERVAREAREAEEAAQKAIEDEARLKAEA) and 163–186 (DSGRKRDDESSRRRPPAKDEKRTP). Positions 213–223 (PGPAAKQQPAR) are enriched in low complexity. Over residues 255–273 (RAREREKQRRQDTSGGREK) the composition is skewed to basic and acidic residues. Residues 357-527 (PRAPVIAVMG…ALQAELLDLK (171 aa)) enclose the tr-type G domain. The interval 366–373 (GHVDHGKT) is G1. GTP is bound at residue 366-373 (GHVDHGKT). The tract at residues 391–395 (GITQH) is G2. The tract at residues 413 to 416 (DTPG) is G3. GTP is bound by residues 413–417 (DTPGH) and 467–470 (NKCD). The segment at 467–470 (NKCD) is G4. The interval 503–505 (SAK) is G5.

It belongs to the TRAFAC class translation factor GTPase superfamily. Classic translation factor GTPase family. IF-2 subfamily.

The protein localises to the cytoplasm. Its function is as follows. One of the essential components for the initiation of protein synthesis. Protects formylmethionyl-tRNA from spontaneous hydrolysis and promotes its binding to the 30S ribosomal subunits. Also involved in the hydrolysis of GTP during the formation of the 70S ribosomal complex. This Maricaulis maris (strain MCS10) (Caulobacter maris) protein is Translation initiation factor IF-2.